Consider the following 232-residue polypeptide: Methylthioribulose-1-phosphate dehydratase (232 aa).

Cys-91 serves as a coordination point for substrate. Positions 109, 111, and 191 each coordinate Zn(2+).

It belongs to the aldolase class II family. MtnB subfamily. The cofactor is Zn(2+).

It is found in the cytoplasm. It carries out the reaction 5-(methylsulfanyl)-D-ribulose 1-phosphate = 5-methylsulfanyl-2,3-dioxopentyl phosphate + H2O. It participates in amino-acid biosynthesis; L-methionine biosynthesis via salvage pathway; L-methionine from S-methyl-5-thio-alpha-D-ribose 1-phosphate: step 2/6. Its function is as follows. Catalyzes the dehydration of methylthioribulose-1-phosphate (MTRu-1-P) into 2,3-diketo-5-methylthiopentyl-1-phosphate (DK-MTP-1-P). This is Methylthioribulose-1-phosphate dehydratase from Schizosaccharomyces japonicus (strain yFS275 / FY16936) (Fission yeast).